The sequence spans 226 residues: Imidazole glycerol phosphate synthase subunit HisH (226 aa).

The Glutamine amidotransferase type-1 domain maps to asparagine 6–alanine 214. The Nucleophile role is filled by cysteine 84. Active-site residues include histidine 189 and glutamate 191.

Heterodimer of HisH and HisF.

It localises to the cytoplasm. It carries out the reaction 5-[(5-phospho-1-deoxy-D-ribulos-1-ylimino)methylamino]-1-(5-phospho-beta-D-ribosyl)imidazole-4-carboxamide + L-glutamine = D-erythro-1-(imidazol-4-yl)glycerol 3-phosphate + 5-amino-1-(5-phospho-beta-D-ribosyl)imidazole-4-carboxamide + L-glutamate + H(+). It catalyses the reaction L-glutamine + H2O = L-glutamate + NH4(+). It functions in the pathway amino-acid biosynthesis; L-histidine biosynthesis; L-histidine from 5-phospho-alpha-D-ribose 1-diphosphate: step 5/9. In terms of biological role, IGPS catalyzes the conversion of PRFAR and glutamine to IGP, AICAR and glutamate. The HisH subunit catalyzes the hydrolysis of glutamine to glutamate and ammonia as part of the synthesis of IGP and AICAR. The resulting ammonia molecule is channeled to the active site of HisF. This chain is Imidazole glycerol phosphate synthase subunit HisH, found in Gloeobacter violaceus (strain ATCC 29082 / PCC 7421).